Reading from the N-terminus, the 242-residue chain is Glucosamine-6-phosphate deaminase (242 aa).

Residue Asp67 is the Proton acceptor; for enolization step of the active site. The For ring-opening step role is filled by Asn136. His138 functions as the Proton acceptor; for ring-opening step in the catalytic mechanism. The active-site For ring-opening step is Glu143.

This sequence belongs to the glucosamine/galactosamine-6-phosphate isomerase family. NagB subfamily.

It catalyses the reaction alpha-D-glucosamine 6-phosphate + H2O = beta-D-fructose 6-phosphate + NH4(+). The protein operates within amino-sugar metabolism; N-acetylneuraminate degradation; D-fructose 6-phosphate from N-acetylneuraminate: step 5/5. Catalyzes the reversible isomerization-deamination of glucosamine 6-phosphate (GlcN6P) to form fructose 6-phosphate (Fru6P) and ammonium ion. This chain is Glucosamine-6-phosphate deaminase, found in Clostridium perfringens (strain ATCC 13124 / DSM 756 / JCM 1290 / NCIMB 6125 / NCTC 8237 / Type A).